Here is a 127-residue protein sequence, read N- to C-terminus: UPF0102 protein Mmwyl1_2395 (127 aa).

Belongs to the UPF0102 family.

The polypeptide is UPF0102 protein Mmwyl1_2395 (Marinomonas sp. (strain MWYL1)).